The primary structure comprises 133 residues: ATP synthase epsilon chain (133 aa).

Residues 81–110 are disordered; that stretch reads AAERPEQIDTERARKAKERAEQRLASEHVD.

It belongs to the ATPase epsilon chain family. F-type ATPases have 2 components, CF(1) - the catalytic core - and CF(0) - the membrane proton channel. CF(1) has five subunits: alpha(3), beta(3), gamma(1), delta(1), epsilon(1). CF(0) has three main subunits: a, b and c.

The protein resides in the cell membrane. Functionally, produces ATP from ADP in the presence of a proton gradient across the membrane. This is ATP synthase epsilon chain from Shouchella clausii (strain KSM-K16) (Alkalihalobacillus clausii).